An 838-amino-acid chain; its full sequence is G-protein coupled receptor-associated sorting protein 2 (838 aa).

Disordered regions lie at residues 1–122 (MTGA…GARP), 218–292 (ASNE…SNPF), 349–368 (RFRH…RAQK), and 531–552 (LELS…PSPE). A compositionally biased stretch (basic and acidic residues) spans 13 to 31 (KPEKKAGEEVIAGPEREND). Residues 220 to 245 (NESGFWSADETSTASSFWTGEETSVR) show a composition bias toward polar residues. Over residues 255–271 (RSRHRAKHQTNPRSRPR) the composition is skewed to basic residues. Phosphoserine occurs at positions 282 and 284. Polar residues predominate over residues 542–552 (SLLQPDQPSPE).

This sequence belongs to the GPRASP family. Interacts with cytoplasmic tails of a variety of G-protein coupled receptors such as muscarinic acetylcholine receptor M1/CHRM1 and calcitonin receptor/CALCR. As to expression, expressed in the brain.

Functionally, may play a role in regulation of a variety of G-protein coupled receptors. This Homo sapiens (Human) protein is G-protein coupled receptor-associated sorting protein 2 (GPRASP2).